Reading from the N-terminus, the 341-residue chain is tRNA (guanine-N(7)-)-methyltransferase (341 aa).

Glu-75, Glu-100, Asp-127, and Asp-150 together coordinate S-adenosyl-L-methionine. The active site involves Asp-150. Position 154 (Lys-154) interacts with substrate. The interval 156-161 (RHNKRR) is interaction with RNA. Substrate is bound at residue Asp-186.

It belongs to the class I-like SAM-binding methyltransferase superfamily. TrmB family.

It catalyses the reaction guanosine(46) in tRNA + S-adenosyl-L-methionine = N(7)-methylguanosine(46) in tRNA + S-adenosyl-L-homocysteine. The protein operates within tRNA modification; N(7)-methylguanine-tRNA biosynthesis. Its function is as follows. Catalyzes the formation of N(7)-methylguanine at position 46 (m7G46) in tRNA. In Xanthomonas euvesicatoria pv. vesicatoria (strain 85-10) (Xanthomonas campestris pv. vesicatoria), this protein is tRNA (guanine-N(7)-)-methyltransferase.